The following is a 110-amino-acid chain: Cytochrome c oxidase subunit 4B (110 aa).

3 consecutive transmembrane segments (helical) span residues 27 to 47 (YQVL…LTVA), 50 to 70 (GVGS…QVIF), and 88 to 108 (LFLY…VTII).

Belongs to the cytochrome c oxidase bacterial subunit 4 family.

It is found in the cell membrane. The catalysed reaction is 4 Fe(II)-[cytochrome c] + O2 + 8 H(+)(in) = 4 Fe(III)-[cytochrome c] + 2 H2O + 4 H(+)(out). This chain is Cytochrome c oxidase subunit 4B (ctaF), found in Bacillus subtilis (strain 168).